An 86-amino-acid polypeptide reads, in one-letter code: Large ribosomal subunit protein bL31 (86 aa).

The segment at 65-86 (YGMASSDSSEQKDKSSEEKKES) is disordered. The segment covering 73 to 86 (SEQKDKSSEEKKES) has biased composition (basic and acidic residues).

This sequence belongs to the bacterial ribosomal protein bL31 family. Type A subfamily. In terms of assembly, part of the 50S ribosomal subunit.

Binds the 23S rRNA. The sequence is that of Large ribosomal subunit protein bL31 from Prochlorococcus marinus (strain NATL2A).